The chain runs to 1288 residues: Vacuolating cytotoxin autotransporter (1288 aa).

An N-terminal signal peptide occupies residues 1–33 (MEIQQTHRKINRPLVSLVLAGALISAIPQESHA). Positions 326-377 (PPEGGYKDKPNSTTSQSGTKNDKKEISQNNNSNTEVINPPNNTQKTETEPTQ) are disordered. Over residues 352–376 (SQNNNSNTEVINPPNNTQKTETEPT) the composition is skewed to polar residues. Positions 1015-1288 (KYEKPTNVWA…ASNLGMRYSF (274 aa)) constitute an Autotransporter domain.

Its subcellular location is the periplasm. The protein resides in the secreted. It localises to the cell surface. The protein localises to the cell outer membrane. Induces vacuolation of eukaryotic cells. Causes ulceration and gastric lesions. This is Vacuolating cytotoxin autotransporter (vacA) from Helicobacter pylori (strain J99 / ATCC 700824) (Campylobacter pylori J99).